The following is a 163-amino-acid chain: Arginine repressor (163 aa).

It belongs to the ArgR family.

The protein localises to the cytoplasm. Its pathway is amino-acid biosynthesis; L-arginine biosynthesis [regulation]. Functionally, regulates arginine biosynthesis genes. This Corynebacterium diphtheriae (strain ATCC 700971 / NCTC 13129 / Biotype gravis) protein is Arginine repressor.